A 172-amino-acid chain; its full sequence is RNA silencing suppressor p19 (172 aa).

Residues 153 to 172 (EGNVSRGSPEGTEAFKEESE) are disordered.

Belongs to the tombusvirus protein p19 family. In terms of assembly, homodimer.

In terms of biological role, viral suppressor of RNA silencing which binds specifically to silencing RNAs (siRNAs). Acts as a molecular caliper to specifically select siRNAs based on the length of the duplex region of the RNA. The protein is RNA silencing suppressor p19 of Pear latent virus (PeLV).